A 196-amino-acid chain; its full sequence is Holliday junction branch migration complex subunit RuvA (196 aa).

The interval 1-61 (MYEYFEGIVT…DTGITLYGFQ (61 aa)) is domain I. The interval 62–140 (SEDDKGLFLK…DYVARLDRQD (79 aa)) is domain II. Residues 141 to 149 (EEQGNISPA) form a flexible linker region. The domain III stretch occupies residues 149-196 (ALNDALLALIALGYTQKEVDRITTKLEEVNADTADQYIKKGLALLLKK).

It belongs to the RuvA family. In terms of assembly, homotetramer. Forms an RuvA(8)-RuvB(12)-Holliday junction (HJ) complex. HJ DNA is sandwiched between 2 RuvA tetramers; dsDNA enters through RuvA and exits via RuvB. An RuvB hexamer assembles on each DNA strand where it exits the tetramer. Each RuvB hexamer is contacted by two RuvA subunits (via domain III) on 2 adjacent RuvB subunits; this complex drives branch migration. In the full resolvosome a probable DNA-RuvA(4)-RuvB(12)-RuvC(2) complex forms which resolves the HJ.

It is found in the cytoplasm. In terms of biological role, the RuvA-RuvB-RuvC complex processes Holliday junction (HJ) DNA during genetic recombination and DNA repair, while the RuvA-RuvB complex plays an important role in the rescue of blocked DNA replication forks via replication fork reversal (RFR). RuvA specifically binds to HJ cruciform DNA, conferring on it an open structure. The RuvB hexamer acts as an ATP-dependent pump, pulling dsDNA into and through the RuvAB complex. HJ branch migration allows RuvC to scan DNA until it finds its consensus sequence, where it cleaves and resolves the cruciform DNA. This chain is Holliday junction branch migration complex subunit RuvA, found in Lactobacillus helveticus (strain DPC 4571).